Reading from the N-terminus, the 413-residue chain is Serine/threonine-protein phosphatase 7 (413 aa).

Cys28 and Cys67 are disulfide-bonded. Positions 84, 86, 113, and 145 each coordinate Mn(2+). The active-site Proton donor is His146. Mn(2+)-binding residues include His197 and His303. The disordered stretch occupies residues 391 to 413; sequence NVIDSDDEMDKSAMDTNNEQPNS. The segment covering 404–413 has biased composition (polar residues); it reads MDTNNEQPNS.

The protein belongs to the PPP phosphatase family. PP-7 subfamily. In terms of assembly, monomer, homodimer, and heteromer. Interacts with calmodulin (CaM3 and CaM4) and HSFA1A/HSF1. Mn(2+) serves as cofactor. In terms of tissue distribution, expressed in leaves, and, to a lower extent, in stems and flowers.

The protein resides in the nucleus. It is found in the nucleoplasm. It carries out the reaction O-phospho-L-seryl-[protein] + H2O = L-seryl-[protein] + phosphate. It catalyses the reaction O-phospho-L-threonyl-[protein] + H2O = L-threonyl-[protein] + phosphate. Its activity is regulated as follows. Inhibited by NaF and orthovanadate, as well as by divalent cations such as Ni(2+) and Zn(2+). Inhibited by polylysine with myelin basic protein as substrate, but activated by polylysine with pNPP as substrate. Reversibly regulated by redox agents. Inhibited by submillimolar Pi concentrations. Slightly repressed by calmodulin (CaM). Its function is as follows. Phosphatase active on para-nitrophenylphosphate (pNPP) and on various phosphoproteins such as myelin basic protein. Seems to act as a positive regulator of cryptochrome signaling involved in hypocotyl growth inhibition and cotyledon expansion under white and blue light conditions. Confers thermotolerance. Required for heat shock mediated-signaling pathway that leads to the expression of heat shock proteins (HSPs). The sequence is that of Serine/threonine-protein phosphatase 7 (PP7) from Arabidopsis thaliana (Mouse-ear cress).